Reading from the N-terminus, the 157-residue chain is Polyferredoxin protein VhcB (157 aa).

3 4Fe-4S ferredoxin-type domains span residues 23–52 (NGISWDREKCEYCGPCAIKCPNDAIMVVNP), 62–92 (KTERANEFKMCDLCGTCVSACPTEALQMGKI), and 100–129 (DRIEFTPSLCDSCGACVEICPQNVLKLNEE). The [4Fe-4S] cluster site is built by cysteine 32, cysteine 35, cysteine 38, cysteine 42, cysteine 72, cysteine 75, cysteine 78, cysteine 82, cysteine 109, cysteine 112, cysteine 115, cysteine 119, cysteine 136, cysteine 139, cysteine 142, and cysteine 146.

[4Fe-4S] cluster is required as a cofactor.

This Methanococcus voltae protein is Polyferredoxin protein VhcB (vhcB).